The chain runs to 144 residues: Large ribosomal subunit protein uL13 (144 aa).

This sequence belongs to the universal ribosomal protein uL13 family. Part of the 50S ribosomal subunit.

Its function is as follows. This protein is one of the early assembly proteins of the 50S ribosomal subunit, although it is not seen to bind rRNA by itself. It is important during the early stages of 50S assembly. This is Large ribosomal subunit protein uL13 from Clostridium botulinum (strain Alaska E43 / Type E3).